The chain runs to 361 residues: Outer membrane protein P2 (361 aa).

The first 20 residues, 1-20, serve as a signal peptide directing secretion; sequence MKKTLAALIVGAFAASAANA.

It belongs to the Gram-negative porin family. As to quaternary structure, homotrimer.

It is found in the cell outer membrane. Forms pores that allow passive diffusion of small molecules across the outer membrane. The sequence is that of Outer membrane protein P2 (ompP2) from Haemophilus influenzae.